A 169-amino-acid chain; its full sequence is Protein-export protein SecB (169 aa).

The protein belongs to the SecB family. In terms of assembly, homotetramer, a dimer of dimers. One homotetramer interacts with 1 SecA dimer.

The protein resides in the cytoplasm. One of the proteins required for the normal export of preproteins out of the cell cytoplasm. It is a molecular chaperone that binds to a subset of precursor proteins, maintaining them in a translocation-competent state. It also specifically binds to its receptor SecA. This is Protein-export protein SecB from Pseudoalteromonas atlantica (strain T6c / ATCC BAA-1087).